Reading from the N-terminus, the 84-residue chain is Toxin NvePTx1 (84 aa).

Residues 1-21 (MFSARLVLVFAVVLCIQLCNA) form the signal peptide. Residues 22–34 (SWLDERAMTQEKR) constitute a propeptide that is removed on maturation.

The protein belongs to the sea anemone type 5 potassium channel toxin family. In terms of processing, contains 4 disulfide bonds. In unfertilized eggs and early post-fertilization stages, is expressed uniformly. In gastrulae, the expression becomes spatially-localized and seems to be absent from the oral and aboral poles. In planulae, the expression is clearly observed in the ectoderm in packed gland cells absent from the two body poles, and upon metamorphosis, the expression diminishes. There is two types of gland cells, one large and elongated and another small and round. This toxin is maternally deposited at both protein and RNA levels.

It is found in the secreted. The protein localises to the nematocyst. Functionally, neurotoxin that is probably only defensive. Acts as a voltage-gated potassium channel (Kv) inhibitor. In vivo, induces a rapid increase in swimming speed on zebrafish larvae, as well as death which occurs between 2 and 18 hours later. This is Toxin NvePTx1 from Nematostella vectensis (Starlet sea anemone).